A 330-amino-acid chain; its full sequence is MRVTMSLEALTTEALAAIAAAQDLAALDQVRVLFTGKKSQLAEQSKALGKMDPEQRKVQGAAIHAVREAINAALTERQTALQQAALQQKLASETIDITLPGRGQHMGSIHPVTQVQERICQFFTKAGFSVATGPEVEDDYHNFEALNIPGHHPARAMHDTFYFDVNHLLRTHTSGVQIRTMETTQPPIRIVCPGRVYRCDSDQTHSPMFHQIEGLYVAENTSFAELKGLLINLLNEFFEKDLKVRFRPSYFPFTEPSAEVDIMDERGRWLEVLGCGMVHPNVLRAAGIDPEKYKGFAFGLGVERFAMLRYGINDLRMFYQNDVRFLRQFA.

Glu255 lines the Mg(2+) pocket.

Belongs to the class-II aminoacyl-tRNA synthetase family. Phe-tRNA synthetase alpha subunit type 1 subfamily. In terms of assembly, tetramer of two alpha and two beta subunits. It depends on Mg(2+) as a cofactor.

The protein resides in the cytoplasm. It catalyses the reaction tRNA(Phe) + L-phenylalanine + ATP = L-phenylalanyl-tRNA(Phe) + AMP + diphosphate + H(+). The protein is Phenylalanine--tRNA ligase alpha subunit of Acinetobacter baylyi (strain ATCC 33305 / BD413 / ADP1).